We begin with the raw amino-acid sequence, 348 residues long: tRNA N6-adenosine threonylcarbamoyltransferase (348 aa).

Positions 120 and 124 each coordinate Fe cation. Substrate is bound by residues 143–147 (LVSGG), D176, G189, and N282. D310 contacts Fe cation.

This sequence belongs to the KAE1 / TsaD family. The cofactor is Fe(2+).

The protein resides in the cytoplasm. It carries out the reaction L-threonylcarbamoyladenylate + adenosine(37) in tRNA = N(6)-L-threonylcarbamoyladenosine(37) in tRNA + AMP + H(+). Functionally, required for the formation of a threonylcarbamoyl group on adenosine at position 37 (t(6)A37) in tRNAs that read codons beginning with adenine. Is involved in the transfer of the threonylcarbamoyl moiety of threonylcarbamoyl-AMP (TC-AMP) to the N6 group of A37, together with TsaE and TsaB. TsaD likely plays a direct catalytic role in this reaction. This Paracidovorax citrulli (strain AAC00-1) (Acidovorax citrulli) protein is tRNA N6-adenosine threonylcarbamoyltransferase.